We begin with the raw amino-acid sequence, 109 residues long: Putative double-stranded DNA mimic protein YciU (109 aa).

The protein belongs to the putative dsDNA mimic protein family.

In terms of biological role, may act as a double-stranded DNA (dsDNA) mimic. Probably regulates the activity of a dsDNA-binding protein. This is Putative double-stranded DNA mimic protein YciU from Shigella flexneri.